Consider the following 79-residue polypeptide: UPF0349 protein BCE_5075 (79 aa).

The protein belongs to the UPF0349 family.

This Bacillus cereus (strain ATCC 10987 / NRS 248) protein is UPF0349 protein BCE_5075.